The chain runs to 989 residues: Phosphoenolpyruvate carboxylase (989 aa).

Active-site residues include histidine 175 and lysine 630.

This sequence belongs to the PEPCase type 1 family. Requires Mg(2+) as cofactor.

It catalyses the reaction oxaloacetate + phosphate = phosphoenolpyruvate + hydrogencarbonate. Forms oxaloacetate, a four-carbon dicarboxylic acid source for the tricarboxylic acid cycle. This chain is Phosphoenolpyruvate carboxylase, found in Prochlorococcus marinus (strain AS9601).